Consider the following 137-residue polypeptide: Large ribosomal subunit protein uL16 (137 aa).

This sequence belongs to the universal ribosomal protein uL16 family. Part of the 50S ribosomal subunit.

Functionally, binds 23S rRNA and is also seen to make contacts with the A and possibly P site tRNAs. The chain is Large ribosomal subunit protein uL16 from Thioalkalivibrio sulfidiphilus (strain HL-EbGR7).